Consider the following 232-residue polypeptide: Beta-casein (232 aa).

The signal sequence occupies residues 1–15 (MKVLILACRVALALA). A phosphoserine mark is found at Ser30, Ser32, Ser33, and Ser34.

It belongs to the beta-casein family. In terms of tissue distribution, mammary gland specific. Secreted in milk.

Its subcellular location is the secreted. In terms of biological role, important role in determination of the surface properties of the casein micelles. The protein is Beta-casein (CSN2) of Camelus dromedarius (Dromedary).